The chain runs to 472 residues: uncharacterized protein (472 aa).

Belongs to the AllG family.

This is an uncharacterized protein from Escherichia coli (strain K12).